A 500-amino-acid chain; its full sequence is Protein gar2 (500 aa).

Composition is skewed to basic and acidic residues over residues 1–41 (MAKK…KEIA) and 59–68 (KRASSPEPSK). Residues 1-262 (MAKKDKTSVK…TKPSQDSNET (262 aa)) are disordered. Over residues 69–78 (KSVKKQKKSK) the composition is skewed to basic residues. A compositionally biased stretch (low complexity) spans 90–120 (ESSSSESESSSSESESSSSESESSSSESSSS). The span at 126 to 137 (VIVKTEEKKESS) shows a compositional bias: basic and acidic residues. 3 positions are modified to phosphoserine: S143, S144, and S146. Residues 152–163 (AVVKIEEKKESS) are compositionally biased toward basic and acidic residues. The segment covering 164 to 182 (SDSSSESSSSESESESSSS) has biased composition (low complexity). A compositionally biased stretch (basic and acidic residues) spans 191–201 (VEKTEEKKEGS). A compositionally biased stretch (low complexity) spans 202 to 218 (SESSSDSESSSDSSSES). The segment covering 219-233 (GDSDSSSDSESESSS) has biased composition (acidic residues). The segment covering 234 to 250 (EDEKKRKAEPASEERPA) has biased composition (basic and acidic residues). 2 RRM domains span residues 263 to 341 (CTVF…LSNP) and 366 to 443 (DTVF…FSTP). A disordered region spans residues 441 to 500 (STPRTGGGSRGGRGGFGGRGGFGGRGGFGGGRGRGRGGARSGNPNRGSVAPFSGNKVTFD). Positions 445–480 (TGGGSRGGRGGFGGRGGFGGRGGFGGGRGRGRGGAR) are enriched in gly residues.

This sequence belongs to the RRM GAR family.

Its subcellular location is the nucleus. The protein resides in the nucleolus. In terms of biological role, helps the assembly of pre-ribosomal particles containing 18S rRNA. The sequence is that of Protein gar2 (gar2) from Schizosaccharomyces pombe (strain 972 / ATCC 24843) (Fission yeast).